The chain runs to 536 residues: Butyrophilin-like protein 9 (536 aa).

The N-terminal stretch at 1-35 is a signal peptide; the sequence is MADFSVFLGFLKQIPRCLSIFFTYLLFLQLWEVNS. 2 Ig-like V-type domains span residues 36–149 and 152–241; these read DKVW…WELE and GSGS…KEFV. Residues 36-257 are Extracellular-facing; that stretch reads DKVWVLGPEE…FLPRMSPWKK (222 aa). Cys59 and Cys133 are oxidised to a cystine. N-linked (GlcNAc...) asparagine glycosylation is found at Asn102, Asn139, and Asn224. Cys173 and Cys227 are disulfide-bonded. The chain crosses the membrane as a helical span at residues 258–278; it reads AFVGTLVVLPLSLIVLTMLAL. Residues 279-536 are Cytoplasmic-facing; it reads RYFYKLRSFQ…PAWAVNEAVS (258 aa). The region spanning 307–506 is the B30.2/SPRY domain; sequence DWRRSEGQAE…MTICSLPVRG (200 aa).

The protein belongs to the immunoglobulin superfamily. BTN/MOG family.

It is found in the membrane. The polypeptide is Butyrophilin-like protein 9 (Btnl9) (Mus musculus (Mouse)).